The chain runs to 252 residues: Small ribosomal subunit protein uS3 (252 aa).

One can recognise a KH type-2 domain in the interval 16 to 85 (IDEYLETKLE…NPQVEVKEVD (70 aa)). The disordered stretch occupies residues 233–252 (EESEIEEITEEIEDVETLEE).

Belongs to the universal ribosomal protein uS3 family. Part of the 30S ribosomal subunit.

Its function is as follows. Binds the lower part of the 30S subunit head. The polypeptide is Small ribosomal subunit protein uS3 (Methanosphaera stadtmanae (strain ATCC 43021 / DSM 3091 / JCM 11832 / MCB-3)).